A 71-amino-acid polypeptide reads, in one-letter code: Large ribosomal subunit protein bL32c (71 aa).

Residues 1–24 (MAVPKKRTSRSKKKIRKNVRKGKK) form a disordered region.

It belongs to the bacterial ribosomal protein bL32 family.

It localises to the plastid. Its subcellular location is the chloroplast. The protein is Large ribosomal subunit protein bL32c of Pinus koraiensis (Korean pine).